Reading from the N-terminus, the 859-residue chain is Rod cGMP-specific 3',5'-cyclic phosphodiesterase subunit alpha (859 aa).

Residue glycine 2 is modified to N-acetylglycine. 2 consecutive GAF domains span residues 73 to 222 and 254 to 431; these read QAEK…NLIM and DIER…GWSV. Residues 483-816 form the PDEase domain; that stretch reads EEEELAEILQ…KEWKALADEY (334 aa). Residue histidine 559 is the Proton donor of the active site. The a divalent metal cation site is built by histidine 563, histidine 599, aspartate 600, and aspartate 720. Positions 821 to 859 are disordered; the sequence is KGLEEEKQKQQAANQAAAGSQHGGKQPGGGPASKSCCVQ. A compositionally biased stretch (low complexity) spans 830-840; sequence QQAANQAAAGS. Gly residues predominate over residues 841–851; sequence QHGGKQPGGGP. Residue cysteine 856 is modified to Cysteine methyl ester. Cysteine 856 carries S-farnesyl cysteine lipidation. The propeptide at 857 to 859 is removed in mature form; it reads CVQ.

The protein belongs to the cyclic nucleotide phosphodiesterase family. Oligomer composed of two catalytic chains (alpha and beta), an inhibitory chain (gamma) and the delta chain. Requires a divalent metal cation as cofactor.

It is found in the cell membrane. The protein resides in the cell projection. Its subcellular location is the cilium. The protein localises to the photoreceptor outer segment. The catalysed reaction is 3',5'-cyclic GMP + H2O = GMP + H(+). Functionally, rod-specific cGMP phosphodiesterase that catalyzes the hydrolysis of 3',5'-cyclic GMP. This protein participates in processes of transmission and amplification of the visual signal. In Bos taurus (Bovine), this protein is Rod cGMP-specific 3',5'-cyclic phosphodiesterase subunit alpha.